We begin with the raw amino-acid sequence, 631 residues long: MSTTTLTRREQRAKAQHFIDTLEGTAFPNSKRIYVTGSQHDIRVPMREIQLSPTLIGGSKDNQQFEENEAVPVYDTSGPYGDPEVAINVQQGLAKLRQPWIDARNDSEELDDRSSAYTRERLADDGLDDLRFTGLLTPKRAKAGKRITQLHYARQGIVTPEMEFIAIRENMGRERICSEVLRHQHPGMSFGARLPENITPEFVRDEVAAGRAIIPANINHPESEPMIIGRNFLVKVNANIGNSAVTSSIEEEVEKLVWSTRWGADTVMDLSTGRYIHETREWILRNSPVPIGTVPIYQALEKVNGIAEDLTWEAFRDTLLEQAEQGVDYFTIHAGVLLRYVPMTAKRLTGIVSRGGSIMAKWCLSHHKENFLFEHFREICEICAAYDVSLSLGDGLRPGSIQDANDEAQFSELHTLGELTKIAWEYDVQVMIEGPGHVPMHMIQRNMTEELESCHEAPFYTLGPLTTDIAPGYDHFTSGIGAAMIGWFGCAMLCYVTPKEHLGLPNKEDVKQGLITYKIAAHAADLAKGHPGAQIRDNAMSKARFEFRWEDQFNLALDPFTARAYHDETLPQESGKVAHFCSMCGPKFCSMKISQEVRDYAAAQAIEVGMADMSENFRAKGGEIYLKREEA.

Residues N239, M268, Y297, H333, 353–355 (SRG), 394–397 (DGLR), and E433 contribute to the substrate site. Position 437 (H437) interacts with Zn(2+). Y460 is a binding site for substrate. H501 serves as a coordination point for Zn(2+). [4Fe-4S] cluster contacts are provided by C581, C584, and C589.

This sequence belongs to the ThiC family. In terms of assembly, homodimer. [4Fe-4S] cluster serves as cofactor.

The catalysed reaction is 5-amino-1-(5-phospho-beta-D-ribosyl)imidazole + S-adenosyl-L-methionine = 4-amino-2-methyl-5-(phosphooxymethyl)pyrimidine + CO + 5'-deoxyadenosine + formate + L-methionine + 3 H(+). Its pathway is cofactor biosynthesis; thiamine diphosphate biosynthesis. Functionally, catalyzes the synthesis of the hydroxymethylpyrimidine phosphate (HMP-P) moiety of thiamine from aminoimidazole ribotide (AIR) in a radical S-adenosyl-L-methionine (SAM)-dependent reaction. The chain is Phosphomethylpyrimidine synthase from Salmonella enteritidis PT4 (strain P125109).